Consider the following 473-residue polypeptide: Ribulose bisphosphate carboxylase large chain (473 aa).

Lysine 8 carries the post-translational modification N6,N6,N6-trimethyllysine. Positions 117 and 167 each coordinate substrate. Lysine 169 (proton acceptor) is an active-site residue. Lysine 171 provides a ligand contact to substrate. Mg(2+) is bound by residues lysine 195, aspartate 197, and glutamate 198. Lysine 195 bears the N6-carboxylysine mark. The Proton acceptor role is filled by histidine 288. The substrate site is built by arginine 289, histidine 321, and serine 373.

The protein belongs to the RuBisCO large chain family. Type I subfamily. As to quaternary structure, heterohexadecamer of 8 large chains and 8 small chains; disulfide-linked. The disulfide link is formed within the large subunit homodimers. It depends on Mg(2+) as a cofactor. The disulfide bond which can form in the large chain dimeric partners within the hexadecamer appears to be associated with oxidative stress and protein turnover.

The protein localises to the plastid. The protein resides in the chloroplast. The enzyme catalyses 2 (2R)-3-phosphoglycerate + 2 H(+) = D-ribulose 1,5-bisphosphate + CO2 + H2O. It carries out the reaction D-ribulose 1,5-bisphosphate + O2 = 2-phosphoglycolate + (2R)-3-phosphoglycerate + 2 H(+). In terms of biological role, ruBisCO catalyzes two reactions: the carboxylation of D-ribulose 1,5-bisphosphate, the primary event in carbon dioxide fixation, as well as the oxidative fragmentation of the pentose substrate in the photorespiration process. Both reactions occur simultaneously and in competition at the same active site. In Amorphophallus titanum (Titan arum), this protein is Ribulose bisphosphate carboxylase large chain.